The sequence spans 498 residues: Pre-glycoprotein polyprotein GP complex (498 aa).

The N-myristoyl glycine; by host moiety is linked to residue G2. The Extracellular portion of the chain corresponds to G2–E17. Residues V18–K33 form a helical membrane-spanning segment. The Cytoplasmic segment spans residues A34 to G58. Zn(2+) is bound at residue C57. Residues M59–D438 are Extracellular-facing. 5 N-linked (GlcNAc...) asparagine; by host glycosylation sites follow: N85, N95, N114, N124, and N171. 6 disulfides stabilise this stretch: C92/C239, C123/C160, C184/C220, C285/C298, C307/C316, and C370/C391. N232 carries N-linked (GlcNAc...) asparagine; by host glycosylation. N-linked (GlcNAc...) asparagine; by host glycosylation is found at N371, N396, and N401. Residues L439–P459 form a helical membrane-spanning segment. Topologically, residues T460–R498 are cytoplasmic. Zn(2+) contacts are provided by H461, H463, C469, H473, C481, and C483.

It belongs to the arenaviridae GPC protein family. In terms of assembly, interacts with glycoprotein G2. Part of the GP complex (GP-C) together with glycoprotein G1 and glycoprotein G2. The GP-complex interacts with protein Z, which interacts with ribonucleocapsid; these interactions may induce virion budding. Homotrimer; disulfide-linked. In pre-fusion state, G1 homotrimers bind G2 homotrimers via ionic interactions. Part of the GP complex (GP-C) together with glycoprotein G2 and the stable signal peptide. Interacts with the primary host receptor DAG1 on the cell surface. The GP-complex interacts with protein Z, which interacts with ribonucleocapsid; these interactions may induce virion budding. As to quaternary structure, homotrimer. Interacts with the stable signal peptide. In pre-fusion state, G2 homotrimers bind G1 homotrimers via ionic interactions. Part of the GP complex (GP-C) together with glycoprotein G1 and the stable signal peptide. Acidification in the endosome triggers rearrangements, which ultimately leads to a 6 helix bundle formed by the two heptad repeat domains (HR1 and HR2) in post-fusion state. The GP-complex interacts with protein Z, which interacts with ribonucleocapsid; these interactions may induce virion budding. Specific enzymatic cleavages in vivo yield mature proteins. GP-C polyprotein is cleaved in the endoplasmic reticulum by the host protease MBTPS1. Only cleaved glycoprotein is incorporated into virions. Post-translationally, the SSP remains stably associated with the GP complex following cleavage by signal peptidase and plays crucial roles in the trafficking of GP through the secretory pathway. In terms of processing, myristoylation is necessary for GP2-mediated fusion activity. Inhibition of host myristoylation by the compound DDD85646 leads to the abrogation of GP2-mediated fusion upon exposure to low pH and inhibition of viral multiplication.

It is found in the virion membrane. It localises to the host endoplasmic reticulum membrane. The protein resides in the host Golgi apparatus membrane. Its subcellular location is the host cell membrane. Functions as a cleaved signal peptide that is retained as the third component of the GP complex (GP-C). Helps to stabilize the spike complex in its native conformation. The SSP is required for efficient glycoprotein expression, post-translational maturation cleavage of G1 and G2, glycoprotein transport to the cell surface plasma membrane, formation of infectious virus particles, and acid pH-dependent glycoprotein-mediated cell fusion. In terms of biological role, forms the virion spikes together with glycoprotein G2. The glycoprotein spike trimers are connected to the underlying matrix. Interacts with the host receptor. Mediates virus attachment to the host primary receptor alpha-dystroglycan DAG1 (alpha-DG) at the cell surface. Down-modulates host DAG1. Functionally, forms the virion spikes together with glycoprotein G1. The glycoprotein spike trimers are connected to the underlying matrix. Class I viral fusion protein that directs fusion of viral and host endosomal membranes, leading to delivery of the nucleocapsid into the cytoplasm. Membrane fusion is mediated by irreversible conformational changes induced by acidification. This chain is Pre-glycoprotein polyprotein GP complex, found in Homo sapiens (Human).